The sequence spans 249 residues: Glucosamine-6-phosphate deaminase 2 (249 aa).

Asp67 (proton acceptor; for enolization step) is an active-site residue. Catalysis depends on Asn136, which acts as the For ring-opening step. The active-site Proton acceptor; for ring-opening step is His138. Catalysis depends on Glu143, which acts as the For ring-opening step.

It belongs to the glucosamine/galactosamine-6-phosphate isomerase family. NagB subfamily.

The enzyme catalyses alpha-D-glucosamine 6-phosphate + H2O = beta-D-fructose 6-phosphate + NH4(+). Its pathway is amino-sugar metabolism; N-acetylneuraminate degradation; D-fructose 6-phosphate from N-acetylneuraminate: step 5/5. Functionally, catalyzes the reversible isomerization-deamination of glucosamine 6-phosphate (GlcN6P) to form fructose 6-phosphate (Fru6P) and ammonium ion. Required for growth on glucosamine and also provides the majority of GlcN6P deaminase activity during growth on N-acetylglucosamine (GlcNAc). The protein is Glucosamine-6-phosphate deaminase 2 of Bacillus subtilis (strain 168).